The sequence spans 908 residues: 3-phosphoinositide-dependent protein kinase B (908 aa).

3 stretches are compositionally biased toward low complexity: residues Asn53–Leu170, Tyr179–Tyr189, and Gln200–His216. The segment at Asn53 to Ser267 is disordered. Residues Lys250–Ile262 show a composition bias toward polar residues. The 257-residue stretch at Phe271–Phe527 folds into the Protein kinase domain. Residues Ala281 to Gly283 and Lys300 contribute to the ATP site. The tract at residues Leu302–Phe346 is PIF-pocket. Residues Glu349–Cys351 and Asp355 contribute to the ATP site. The active-site Proton acceptor is the Asp394. The ATP site is built by Glu398 and Asp412. 2 disordered regions span residues Ser538–Leu560 and Ile606–Gln755. Positions Ser607–Thr684 are enriched in low complexity. Over residues Ser696–Asn709 the composition is skewed to polar residues. The segment covering Gln710 to Thr741 has biased composition (low complexity). In terms of domain architecture, PH spans Ser764–Leu902.

It belongs to the protein kinase superfamily. AGC Ser/Thr protein kinase family. PDPK1 subfamily.

It carries out the reaction L-seryl-[protein] + ATP = O-phospho-L-seryl-[protein] + ADP + H(+). It catalyses the reaction L-threonyl-[protein] + ATP = O-phospho-L-threonyl-[protein] + ADP + H(+). The chain is 3-phosphoinositide-dependent protein kinase B (pdkB) from Dictyostelium discoideum (Social amoeba).